Here is a 180-residue protein sequence, read N- to C-terminus: Large ribosomal subunit protein uL5 (180 aa).

It belongs to the universal ribosomal protein uL5 family. In terms of assembly, part of the 50S ribosomal subunit; part of the 5S rRNA/L5/L18/L25 subcomplex. Contacts the 5S rRNA and the P site tRNA. Forms a bridge to the 30S subunit in the 70S ribosome.

Its function is as follows. This is one of the proteins that bind and probably mediate the attachment of the 5S RNA into the large ribosomal subunit, where it forms part of the central protuberance. In the 70S ribosome it contacts protein S13 of the 30S subunit (bridge B1b), connecting the 2 subunits; this bridge is implicated in subunit movement. Contacts the P site tRNA; the 5S rRNA and some of its associated proteins might help stabilize positioning of ribosome-bound tRNAs. In Clostridium botulinum (strain ATCC 19397 / Type A), this protein is Large ribosomal subunit protein uL5.